Here is a 482-residue protein sequence, read N- to C-terminus: Pentatricopeptide repeat-containing protein At1g74900, mitochondrial (482 aa).

PPR repeat units follow at residues 90–124 (DASSFDLAIDIAARLHLHPTVWSLIHRMRSLRIGP), 125–159 (SPKTFAIVAERYASAGKPDKAVKLFLNMHEHGCFQ), 160–190 (DLASFNTILDVLCKSKRVEKAYELFRALRGR), 194–228 (DTVTYNVILNGWCLIKRTPKALEVLKEMVERGINP), 229–263 (NLTTYNTMLKGFFRAGQIRHAWEFFLEMKKRDCEI), 264–298 (DVVTYTTVVHGFGVAGEIKRARNVFDEMIREGVLP), 299–333 (SVATYNAMIQVLCKKDNVENAVVMFEEMVRRGYEP), 334–368 (NVTTYNVLIRGLFHAGEFSRGEELMQRMENEGCEP), 369–403 (NFQTYNMMIRYYSECSEVEKALGLFEKMGSGDCLP), 404–441 (NLDTYNILISGMFVRKRSEDMVVAGKLLLEMVERGFIP), and 442–476 (RKFTFNRVLNGLLLTGNQAFAKEILRLQSKSGSRL).

This sequence belongs to the PPR family. P subfamily.

It is found in the mitochondrion. Required for the trans-splicing of intron 1 of the mitochondrial nad1 transcript encoding the ND1 subunit of the mitochondrial membrane respiratory chain NADH dehydrogenase (Complex I). In Arabidopsis thaliana (Mouse-ear cress), this protein is Pentatricopeptide repeat-containing protein At1g74900, mitochondrial (OTP43).